Reading from the N-terminus, the 176-residue chain is Large ribosomal subunit protein uL10 (176 aa).

The protein belongs to the universal ribosomal protein uL10 family. In terms of assembly, part of the ribosomal stalk of the 50S ribosomal subunit. The N-terminus interacts with L11 and the large rRNA to form the base of the stalk. The C-terminus forms an elongated spine to which L12 dimers bind in a sequential fashion forming a multimeric L10(L12)X complex.

Forms part of the ribosomal stalk, playing a central role in the interaction of the ribosome with GTP-bound translation factors. This chain is Large ribosomal subunit protein uL10, found in Acaryochloris marina (strain MBIC 11017).